The sequence spans 131 residues: Small ribosomal subunit protein uS11 (131 aa).

Belongs to the universal ribosomal protein uS11 family. As to quaternary structure, part of the 30S ribosomal subunit. Interacts with proteins S7 and S18. Binds to IF-3.

Located on the platform of the 30S subunit, it bridges several disparate RNA helices of the 16S rRNA. Forms part of the Shine-Dalgarno cleft in the 70S ribosome. The protein is Small ribosomal subunit protein uS11 of Bacillus pumilus (strain SAFR-032).